We begin with the raw amino-acid sequence, 472 residues long: Glutamine synthetase (472 aa).

Residues 17-101 (YDIKFVLLRF…LRCSIYEPST (85 aa)) form the GS beta-grasp domain. In terms of domain architecture, GS catalytic spans 109–472 (PRSIAIRAEN…HPVEFEMYYA (364 aa)). 2 residues coordinate Mg(2+): Glu-134 and Glu-136. Glu-212 lines the ATP pocket. Residues Glu-217 and Glu-225 each contribute to the Mg(2+) site. Residues 269 to 270 (NG) and Gly-270 contribute to the L-glutamate site. His-274 provides a ligand contact to Mg(2+). ATP contacts are provided by residues 276–278 (NMS) and Ser-278. L-glutamate is bound by residues Arg-326, Glu-332, and Arg-344. Residues Arg-344, Arg-349, and Lys-357 each coordinate ATP. Glu-362 lines the Mg(2+) pocket. Residue Arg-364 participates in L-glutamate binding. The residue at position 402 (Tyr-402) is an O-AMP-tyrosine.

This sequence belongs to the glutamine synthetase family. As to quaternary structure, oligomer of 12 subunits arranged in the form of two hexameric ring. Requires Mg(2+) as cofactor.

Its subcellular location is the cytoplasm. It carries out the reaction L-glutamate + NH4(+) + ATP = L-glutamine + ADP + phosphate + H(+). The activity of this enzyme could be controlled by adenylation under conditions of abundant glutamine. Its function is as follows. Catalyzes the ATP-dependent biosynthesis of glutamine from glutamate and ammonia. The sequence is that of Glutamine synthetase from Pasteurella multocida (strain Pm70).